A 786-amino-acid chain; its full sequence is MPPKPLFPNVFPGDGAPRKRRLALALLAVPGLVPAVSYAQLSGAAAQPQPLDSPWDLRLAPQLEDHPLKDGAKPAAFVIADHTSGTAEQDLAAKGSAELRRGDAVVKADALHYDQDTDMADAYGQVRVINGGTSFAGPEAHLKVEANQGFMTAPKYHFNVTGGSGSAERVDLLDSERSVFVNGTYTACQCATDPAWYIKGSRFDFDTGADEGTARNGVLFFQGVPIFASPWLTFPLSGERRSGLLPPTFSLNSNNGFELTLPYYFNIAPNRDLTITPRIISRRGVQTEASFRYLSPTYSGTLTANYLPDDRLAHRNRYAIYWQHQQNFGGGFGGYVYFNKVSDNTYPEDLGSTNEFINGTQTLYQQEAGLTYNNGPWSVLARYQHWQTLPPSIAPYSREPQLNVKYTKYNVGGFDFGAEADYSRFRITTADATEGDRIVFNPYIAYGVYGPGYFVVPKVQYHFASYDLNYLSSSTPNSPKRFTESIPTVSFDTGLIFDRSVRLFGQDFIQTLEPRLYYVYTPYRDQSNAPLFDTAESDFGLAEIYQPNTFVGNDRIADANRITAGLTSRFIDPRTGDERARFVIAQQYYFANQRVTLNSVQAPVQARHSDLIVGAALKLGSGFMSETAFQYNQNNNQLVKSSIGFGFSPGERRVINVGYRYTRANTTLDNQPINQFLVSAQWPLTRRLYAVGRFNYDLAANRVVDGLLGLQYDADCWALGVGAQRFANGVNSSGQQNSSTRFMMQLTLKGLSSIDNGLVAAFRAGVPGYTALPSAPPPMSRFSNYE.

Positions 1–39 are cleaved as a signal peptide; that stretch reads MPPKPLFPNVFPGDGAPRKRRLALALLAVPGLVPAVSYA.

It belongs to the LptD family. As to quaternary structure, component of the lipopolysaccharide transport and assembly complex. Interacts with LptE and LptA.

Its subcellular location is the cell outer membrane. Functionally, together with LptE, is involved in the assembly of lipopolysaccharide (LPS) at the surface of the outer membrane. The polypeptide is LPS-assembly protein LptD (Burkholderia ambifaria (strain ATCC BAA-244 / DSM 16087 / CCUG 44356 / LMG 19182 / AMMD) (Burkholderia cepacia (strain AMMD))).